A 241-amino-acid polypeptide reads, in one-letter code: Isoprenyl transferase (241 aa).

Residue D17 is part of the active site. D17 is a Mg(2+) binding site. Residues 18 to 21 (GNGR), W22, R30, H34, and 62 to 64 (STE) each bind substrate. Residue N65 is the Proton acceptor of the active site. Substrate is bound by residues W66, R68, R186, and 192–194 (RLS). Mg(2+) is bound at residue E205.

Belongs to the UPP synthase family. As to quaternary structure, homodimer. The cofactor is Mg(2+).

In terms of biological role, catalyzes the condensation of isopentenyl diphosphate (IPP) with allylic pyrophosphates generating different type of terpenoids. This is Isoprenyl transferase from Leptospira interrogans serogroup Icterohaemorrhagiae serovar copenhageni (strain Fiocruz L1-130).